The primary structure comprises 471 residues: Reticulon-2 (471 aa).

Disordered regions lie at residues 1–137 (MGQV…ERPL), 153–181 (SAGS…ASEA), and 205–234 (QLSP…DDEP). Positions 14-25 (APSTASSTPDST) are enriched in low complexity. Basic and acidic residues predominate over residues 32-43 (SDFRELHTAREF). A Phosphoserine modification is found at serine 44. Polar residues-rich tracts occupy residues 100 to 118 (PQQS…LSQS) and 159 to 168 (DSATSSSTPL). Residues 169-181 (ENEEPDGLEASEA) show a composition bias toward acidic residues. The segment covering 205 to 229 (QLSPSSGTPQAHTPSPQRSQDSNSG) has biased composition (polar residues). A phosphoserine mark is found at serine 226 and serine 228. The region spanning 272–471 (VADLLYWKDT…SVSGSKAKAE (200 aa)) is the Reticulon domain. The next 2 helical transmembrane spans lie at 295–315 (LLCL…LLGL) and 390–410 (LLFY…LVIL).

In terms of assembly, interacts with SPAST. Interacts with BACE1. Interacts (via first transmembrane domain) with ARL6IP5/GTRAP3-18. Interacts (via N-terminus) with SLC1A1/EAAC1; the interaction promotes cell surface expression of SLC1A1. In terms of tissue distribution, detected in skeletal and cardiac muscle (at protein level). Expressed predominantly in neural and muscular tissues.

Its subcellular location is the endoplasmic reticulum membrane. It localises to the sarcoplasmic reticulum membrane. The protein resides in the cell membrane. The protein localises to the sarcolemma. It is found in the T-tubule. Its subcellular location is the cytoplasm. It localises to the myofibril. The protein resides in the sarcomere. The protein localises to the z line. It is found in the cytoskeleton. Functionally, inhibits amyloid precursor protein processing, probably by blocking BACE1 activity. Enhances trafficking of the glutamate transporter SLC1A1/EAAC1 from the endoplasmic reticulum to the cell surface. Plays a role in the translocation of SLC2A4/GLUT4 from intracellular membranes to the cell membrane which facilitates the uptake of glucose into the cell. This chain is Reticulon-2, found in Mus musculus (Mouse).